The sequence spans 101 residues: Protein Tat (101 aa).

Positions 1 to 10 (MEPVDPRLEP) are enriched in basic and acidic residues. Residues 1–20 (MEPVDPRLEPWNHPGSQPKT) form a disordered region. An interaction with human CREBBP region spans residues 1 to 24 (MEPVDPRLEPWNHPGSQPKTACNN). A transactivation region spans residues 1–48 (MEPVDPRLEPWNHPGSQPKTACNNCYCKRCCYHCLYCFTKKGLGISYG). 3 residues coordinate Zn(2+): cysteine 22, cysteine 25, and cysteine 27. A cysteine-rich region spans residues 22 to 37 (CNNCYCKRCCYHCLYC). N6-acetyllysine; by host PCAF is present on lysine 28. 4 residues coordinate Zn(2+): cysteine 30, histidine 33, cysteine 34, and cysteine 37. Residues 38–48 (FTKKGLGISYG) form a core region. Residues 48-58 (GRKKRSQRRRT) are compositionally biased toward basic residues. Positions 48–101 (GRKKRSQRRRTPQSSKSHQDLIPEQPLSQQQGDQTGQKKQKEALESKTEADPCD) are disordered. The Nuclear localization signal, RNA-binding (TAR), and protein transduction motif lies at 49–57 (RKKRSQRRR). The tract at residues 49-86 (RKKRSQRRRTPQSSKSHQDLIPEQPLSQQQGDQTGQKK) is interaction with the host capping enzyme RNGTT. N6-acetyllysine; by host EP300 and GCN5L2 is present on residues lysine 50 and lysine 51. Arginine 52 is modified (asymmetric dimethylarginine; by host PRMT6). A compositionally biased stretch (basic and acidic residues) spans 86–101 (KQKEALESKTEADPCD).

The protein belongs to the lentiviruses Tat family. As to quaternary structure, interacts with host CCNT1. Associates with the P-TEFb complex composed at least of Tat, P-TEFb (CDK9 and CCNT1), TAR RNA, RNA Pol II. Recruits the HATs CREBBP, TAF1/TFIID, EP300, PCAF and GCN5L2. Interacts with host KAT5/Tip60; this interaction targets the latter to degradation. Interacts with the host deacetylase SIRT1. Interacts with host capping enzyme RNGTT; this interaction stimulates RNGTT. Binds to host KDR, and to the host integrins ITGAV/ITGB3 and ITGA5/ITGB1. Interacts with host KPNB1/importin beta-1 without previous binding to KPNA1/importin alpha-1. Interacts with EIF2AK2. Interacts with host nucleosome assembly protein NAP1L1; this interaction may be required for the transport of Tat within the nucleus, since the two proteins interact at the nuclear rim. Interacts with host C1QBP/SF2P32; this interaction involves lysine-acetylated Tat. Interacts with the host chemokine receptors CCR2, CCR3 and CXCR4. Interacts with host DPP4/CD26; this interaction may trigger an anti-proliferative effect. Interacts with host LDLR. Interacts with the host extracellular matrix metalloproteinase MMP1. Interacts with host PRMT6; this interaction mediates Tat's methylation. Interacts with, and is ubiquitinated by MDM2/Hdm2. Interacts with host PSMC3 and HTATIP2. Interacts with STAB1; this interaction may overcome SATB1-mediated repression of IL2 and IL2RA (interleukin) in T cells by binding to the same domain than HDAC1. Interacts (when acetylated) with human CDK13, thereby increasing HIV-1 mRNA splicing and promoting the production of the doubly spliced HIV-1 protein Nef. Interacts with host TBP; this interaction modulates the activity of transcriptional pre-initiation complex. Interacts with host RELA. Interacts with host PLSCR1; this interaction negatively regulates Tat transactivation activity by altering its subcellular distribution. Asymmetrical arginine methylation by host PRMT6 seems to diminish the transactivation capacity of Tat and affects the interaction with host CCNT1. In terms of processing, acetylation by EP300, CREBBP, GCN5L2/GCN5 and PCAF regulates the transactivation activity of Tat. EP300-mediated acetylation of Lys-50 promotes dissociation of Tat from the TAR RNA through the competitive binding to PCAF's bromodomain. In addition, the non-acetylated Tat's N-terminus can also interact with PCAF. PCAF-mediated acetylation of Lys-28 enhances Tat's binding to CCNT1. Lys-50 is deacetylated by SIRT1. Post-translationally, polyubiquitination by host MDM2 does not target Tat to degradation, but activates its transactivation function and fosters interaction with CCNT1 and TAR RNA. Phosphorylated by EIF2AK2 on serine and threonine residues adjacent to the basic region important for TAR RNA binding and function. Phosphorylation of Tat by EIF2AK2 is dependent on the prior activation of EIF2AK2 by dsRNA.

It is found in the host nucleus. Its subcellular location is the host nucleolus. The protein localises to the host cytoplasm. It localises to the secreted. Functionally, transcriptional activator that increases RNA Pol II processivity, thereby increasing the level of full-length viral transcripts. Recognizes a hairpin structure at the 5'-LTR of the nascent viral mRNAs referred to as the transactivation responsive RNA element (TAR) and recruits the cyclin T1-CDK9 complex (P-TEFb complex) that will in turn hyperphosphorylate the RNA polymerase II to allow efficient elongation. The CDK9 component of P-TEFb and other Tat-activated kinases hyperphosphorylate the C-terminus of RNA Pol II that becomes stabilized and much more processive. Other factors such as HTATSF1/Tat-SF1, SUPT5H/SPT5, and HTATIP2 are also important for Tat's function. Besides its effect on RNA Pol II processivity, Tat induces chromatin remodeling of proviral genes by recruiting the histone acetyltransferases (HATs) CREBBP, EP300 and PCAF to the chromatin. This also contributes to the increase in proviral transcription rate, especially when the provirus integrates in transcriptionally silent region of the host genome. To ensure maximal activation of the LTR, Tat mediates nuclear translocation of NF-kappa-B by interacting with host RELA. Through its interaction with host TBP, Tat may also modulate transcription initiation. Tat can reactivate a latently infected cell by penetrating in it and transactivating its LTR promoter. In the cytoplasm, Tat is thought to act as a translational activator of HIV-1 mRNAs. Its function is as follows. Extracellular circulating Tat can be endocytosed by surrounding uninfected cells via the binding to several surface receptors such as CD26, CXCR4, heparan sulfate proteoglycans (HSPG) or LDLR. Neurons are rarely infected, but they internalize Tat via their LDLR. Through its interaction with nuclear HATs, Tat is potentially able to control the acetylation-dependent cellular gene expression. Modulates the expression of many cellular genes involved in cell survival, proliferation or in coding for cytokines or cytokine receptors. Tat plays a role in T-cell and neurons apoptosis. Tat induced neurotoxicity and apoptosis probably contribute to neuroAIDS. Circulating Tat also acts as a chemokine-like and/or growth factor-like molecule that binds to specific receptors on the surface of the cells, affecting many cellular pathways. In the vascular system, Tat binds to ITGAV/ITGB3 and ITGA5/ITGB1 integrins dimers at the surface of endothelial cells and competes with bFGF for heparin-binding sites, leading to an excess of soluble bFGF. The sequence is that of Protein Tat from Homo sapiens (Human).